The following is a 466-amino-acid chain: Flagellum-specific ATP synthase (466 aa).

Residue 194–201 (SSSGLGKS) participates in ATP binding.

Belongs to the ATPase alpha/beta chains family.

The protein resides in the cytoplasm. It catalyses the reaction ATP + H2O + 4 H(+)(in) = ADP + phosphate + 5 H(+)(out). In terms of biological role, probable catalytic subunit of a protein translocase for flagellum-specific export, or a proton translocase involved in local circuits at the flagellum. May be involved in a specialized protein export pathway that proceeds without signal peptide cleavage. The sequence is that of Flagellum-specific ATP synthase (fliI) from Buchnera aphidicola subsp. Schizaphis graminum (strain Sg).